The primary structure comprises 548 residues: Probable malate:quinone oxidoreductase (548 aa).

Positions 521–548 are disordered; the sequence is DKPQAADSTPKPQLKPQPVQKEVADIAL. Low complexity predominate over residues 530 to 541; it reads PKPQLKPQPVQK.

The protein belongs to the MQO family. The cofactor is FAD.

The enzyme catalyses (S)-malate + a quinone = a quinol + oxaloacetate. Its pathway is carbohydrate metabolism; tricarboxylic acid cycle; oxaloacetate from (S)-malate (quinone route): step 1/1. This is Probable malate:quinone oxidoreductase from Escherichia coli O17:K52:H18 (strain UMN026 / ExPEC).